The sequence spans 581 residues: Probable hexosyltransferase MUCI70 (581 aa).

The Cytoplasmic portion of the chain corresponds to 1 to 58; that stretch reads MTGLGVRSSSYGSLEKTGLNGVVLPIQITTTTRTKPSKMQKDREGIVHWICKFAGRKK. A helical; Signal-anchor for type II membrane protein membrane pass occupies residues 59–79; sequence VGMLLLFLISAVVFLRVLYVG. At 80-581 the chain is on the lumenal side; it reads KGEDSQEGQG…NLPVRLPDSA (502 aa). N-linked (GlcNAc...) asparagine glycans are attached at residues Asn-96, Asn-102, Asn-119, Asn-194, Asn-224, Asn-285, Asn-382, Asn-411, and Asn-488. The disordered stretch occupies residues 514–581; it reads RFARQRPPVP…NLPVRLPDSA (68 aa). The span at 520-536 shows a compositional bias: pro residues; that stretch reads PPVPNFPPPPPSPPPPV. A compositionally biased stretch (basic residues) spans 553 to 571; that stretch reads PPRRRGRDRRSGQRGHRKA.

It belongs to the glycosyltransferase 8 family. As to expression, expressed in siliques and seeds.

Its subcellular location is the golgi apparatus membrane. It participates in glycan metabolism; pectin biosynthesis. Probable glycosyltransferase involved in pectin and/or xylans biosynthesis in cell walls. Together with IRX14, required for xylan and pectin synthesis in seed coat epidermal (SCE) cells. Collaboratively with GAUT11, essential for the accumulation of seed mucilage, a gelatinous wall rich in unbranched rhamnogalacturonan I (RG I), and for shaping the surface morphology of seeds. The chain is Probable hexosyltransferase MUCI70 from Arabidopsis thaliana (Mouse-ear cress).